A 196-amino-acid polypeptide reads, in one-letter code: DnaA initiator-associating protein DiaA (196 aa).

The 163-residue stretch at 34–196 folds into the SIS domain; sequence LVQSLLNGNK…DNTLFPHQDD (163 aa).

This sequence belongs to the SIS family. DiaA subfamily. Homotetramer; dimer of dimers.

Required for the timely initiation of chromosomal replication via direct interactions with the DnaA initiator protein. This is DnaA initiator-associating protein DiaA from Klebsiella pneumoniae (strain 342).